The following is a 596-amino-acid chain: Aspartate--tRNA(Asp/Asn) ligase (596 aa).

Glutamate 172 contributes to the L-aspartate binding site. The segment at 196–199 (QLFK) is aspartate. An L-aspartate-binding site is contributed by arginine 218. ATP contacts are provided by residues 218 to 220 (RDE) and glutamine 227. Histidine 455 lines the L-aspartate pocket. Glutamate 489 contributes to the ATP binding site. Arginine 496 provides a ligand contact to L-aspartate. 541–544 (GLDR) is a binding site for ATP.

It belongs to the class-II aminoacyl-tRNA synthetase family. Type 1 subfamily. Homodimer.

It is found in the cytoplasm. The enzyme catalyses tRNA(Asx) + L-aspartate + ATP = L-aspartyl-tRNA(Asx) + AMP + diphosphate. Aspartyl-tRNA synthetase with relaxed tRNA specificity since it is able to aspartylate not only its cognate tRNA(Asp) but also tRNA(Asn). Reaction proceeds in two steps: L-aspartate is first activated by ATP to form Asp-AMP and then transferred to the acceptor end of tRNA(Asp/Asn). In Bordetella bronchiseptica (strain ATCC BAA-588 / NCTC 13252 / RB50) (Alcaligenes bronchisepticus), this protein is Aspartate--tRNA(Asp/Asn) ligase.